The sequence spans 408 residues: Imidazolonepropionase (408 aa).

Residues His-73 and His-75 each contribute to the Fe(3+) site. Zn(2+) contacts are provided by His-73 and His-75. Arg-82, Tyr-145, and His-178 together coordinate 4-imidazolone-5-propanoate. Tyr-145 provides a ligand contact to N-formimidoyl-L-glutamate. His-243 provides a ligand contact to Fe(3+). His-243 contacts Zn(2+). Gln-246 provides a ligand contact to 4-imidazolone-5-propanoate. Asp-318 lines the Fe(3+) pocket. Asp-318 contributes to the Zn(2+) binding site. Asn-320 and Gly-322 together coordinate N-formimidoyl-L-glutamate. Residue Ser-323 participates in 4-imidazolone-5-propanoate binding.

This sequence belongs to the metallo-dependent hydrolases superfamily. HutI family. The cofactor is Zn(2+). Fe(3+) serves as cofactor.

Its subcellular location is the cytoplasm. It carries out the reaction 4-imidazolone-5-propanoate + H2O = N-formimidoyl-L-glutamate. Its pathway is amino-acid degradation; L-histidine degradation into L-glutamate; N-formimidoyl-L-glutamate from L-histidine: step 3/3. Functionally, catalyzes the hydrolytic cleavage of the carbon-nitrogen bond in imidazolone-5-propanoate to yield N-formimidoyl-L-glutamate. It is the third step in the universal histidine degradation pathway. The chain is Imidazolonepropionase from Shewanella oneidensis (strain ATCC 700550 / JCM 31522 / CIP 106686 / LMG 19005 / NCIMB 14063 / MR-1).